Here is a 299-residue protein sequence, read N- to C-terminus: GTPase Era (299 aa).

The region spanning 4-171 is the Era-type G domain; that stretch reads KSGFVAILGR…VDILSENLDE (168 aa). The G1 stretch occupies residues 12–19; that stretch reads GRPNVGKS. Residue 12-19 participates in GTP binding; sequence GRPNVGKS. The tract at residues 38–42 is G2; the sequence is XTTRN. The G3 stretch occupies residues 59-62; it reads DTPG. GTP-binding positions include 59-63 and 121-124; these read DTPGI and NKID. The tract at residues 121 to 124 is G4; it reads NKID. A G5 region spans residues 150–152; it reads ISA. In terms of domain architecture, KH type-2 spans 202 to 280; it reads TREEIPHSVA…FLETWVKVKK (79 aa).

This sequence belongs to the TRAFAC class TrmE-Era-EngA-EngB-Septin-like GTPase superfamily. Era GTPase family. Monomer.

The protein resides in the cytoplasm. It is found in the cell membrane. Functionally, an essential GTPase that binds both GDP and GTP, with rapid nucleotide exchange. Plays a role in 16S rRNA processing and 30S ribosomal subunit biogenesis and possibly also in cell cycle regulation and energy metabolism. The sequence is that of GTPase Era from Streptococcus pneumoniae serotype 19F (strain G54).